A 329-amino-acid chain; its full sequence is GTP 3',8-cyclase (329 aa).

One can recognise a Radical SAM core domain in the interval 1 to 229 (MNQVDYLRIS…EGYVRGNGPA (229 aa)). R8 is a GTP binding site. Residues C15 and C19 each contribute to the [4Fe-4S] cluster site. Y21 lines the S-adenosyl-L-methionine pocket. C22 provides a ligand contact to [4Fe-4S] cluster. Residue R60 participates in GTP binding. G64 lines the S-adenosyl-L-methionine pocket. T91 is a binding site for GTP. S115 is a binding site for S-adenosyl-L-methionine. K155 contacts GTP. Residue M189 participates in S-adenosyl-L-methionine binding. 2 residues coordinate [4Fe-4S] cluster: C252 and C255. A GTP-binding site is contributed by 257–259 (RVR). Position 269 (C269) interacts with [4Fe-4S] cluster.

Belongs to the radical SAM superfamily. MoaA family. Monomer and homodimer. The cofactor is [4Fe-4S] cluster.

The enzyme catalyses GTP + AH2 + S-adenosyl-L-methionine = (8S)-3',8-cyclo-7,8-dihydroguanosine 5'-triphosphate + 5'-deoxyadenosine + L-methionine + A + H(+). The protein operates within cofactor biosynthesis; molybdopterin biosynthesis. In terms of biological role, catalyzes the cyclization of GTP to (8S)-3',8-cyclo-7,8-dihydroguanosine 5'-triphosphate. This is GTP 3',8-cyclase from Cyanothece sp. (strain PCC 7425 / ATCC 29141).